The chain runs to 483 residues: Probable cytochrome P450 517A4 (483 aa).

A helical transmembrane segment spans residues 1-21 (MEIVNVLLFLIILFLVKDFVK). Cysteine 429 contributes to the heme binding site.

This sequence belongs to the cytochrome P450 family. It depends on heme as a cofactor.

Its subcellular location is the membrane. This Dictyostelium discoideum (Social amoeba) protein is Probable cytochrome P450 517A4 (cyp517A4).